A 349-amino-acid polypeptide reads, in one-letter code: Magnesium-protoporphyrin IX monomethyl ester [oxidative] cyclase (349 aa).

Positions 1–10 are enriched in low complexity; sequence MTATTATAPA. Residues 1-23 are disordered; the sequence is MTATTATAPAMRGGGRNELPPHL.

It belongs to the AcsF family. Fe cation is required as a cofactor.

The enzyme catalyses Mg-protoporphyrin IX 13-monomethyl ester + 3 NADPH + 3 O2 + 2 H(+) = 3,8-divinyl protochlorophyllide a + 3 NADP(+) + 5 H2O. It participates in porphyrin-containing compound metabolism; chlorophyll biosynthesis (light-independent). Functionally, catalyzes the formation of the isocyclic ring in chlorophyll biosynthesis. Mediates the cyclase reaction, which results in the formation of divinylprotochlorophyllide (Pchlide) characteristic of all chlorophylls from magnesium-protoporphyrin IX 13-monomethyl ester (MgPMME). This Prochlorococcus marinus (strain MIT 9303) protein is Magnesium-protoporphyrin IX monomethyl ester [oxidative] cyclase.